Here is a 163-residue protein sequence, read N- to C-terminus: Nucleotide-binding protein Dhaf_3127 (163 aa).

The protein belongs to the YajQ family.

Functionally, nucleotide-binding protein. This Desulfitobacterium hafniense (strain DSM 10664 / DCB-2) protein is Nucleotide-binding protein Dhaf_3127.